A 464-amino-acid polypeptide reads, in one-letter code: UDP-N-acetylmuramate--L-alanine ligase (464 aa).

111-117 (GAHGKTT) lines the ATP pocket.

It belongs to the MurCDEF family.

The protein resides in the cytoplasm. The catalysed reaction is UDP-N-acetyl-alpha-D-muramate + L-alanine + ATP = UDP-N-acetyl-alpha-D-muramoyl-L-alanine + ADP + phosphate + H(+). It participates in cell wall biogenesis; peptidoglycan biosynthesis. Cell wall formation. This is UDP-N-acetylmuramate--L-alanine ligase from Dictyoglomus turgidum (strain DSM 6724 / Z-1310).